A 424-amino-acid chain; its full sequence is Probable ribonuclease FAU-1 (424 aa).

This sequence belongs to the FAU-1 family.

Functionally, probable RNase involved in rRNA stability through maturation and/or degradation of precursor rRNAs. Binds to RNA in loop regions with AU-rich sequences. In Saccharolobus islandicus (strain M.16.27) (Sulfolobus islandicus), this protein is Probable ribonuclease FAU-1.